The sequence spans 208 residues: Uracil phosphoribosyltransferase (208 aa).

Residues R78, R103, and D130 to S138 contribute to the 5-phospho-alpha-D-ribose 1-diphosphate site. Uracil is bound by residues I193 and G198–A200. A 5-phospho-alpha-D-ribose 1-diphosphate-binding site is contributed by D199.

The protein belongs to the UPRTase family. Mg(2+) serves as cofactor.

The catalysed reaction is UMP + diphosphate = 5-phospho-alpha-D-ribose 1-diphosphate + uracil. Its pathway is pyrimidine metabolism; UMP biosynthesis via salvage pathway; UMP from uracil: step 1/1. Allosterically activated by GTP. Functionally, catalyzes the conversion of uracil and 5-phospho-alpha-D-ribose 1-diphosphate (PRPP) to UMP and diphosphate. This chain is Uracil phosphoribosyltransferase, found in Pelobacter propionicus (strain DSM 2379 / NBRC 103807 / OttBd1).